The following is a 321-amino-acid chain: Olfactory receptor 3A3 (321 aa).

The Extracellular portion of the chain corresponds to 1–34; sequence MSLQKLMEPEAGTNRTAVAEFILLGLVQTEEMQP. An N-linked (GlcNAc...) asparagine glycan is attached at asparagine 14. The helical transmembrane segment at 35-58 threads the bilayer; sequence VVFVLLLFAYLVTTGGNLSILAAV. At 59–66 the chain is on the cytoplasmic side; that stretch reads LVEPKLHA. A helical transmembrane segment spans residues 67–88; that stretch reads PMYFFLGNLSVLDVGCITVTVP. Residues 89–109 lie on the Extracellular side of the membrane; that stretch reads AMLGRLLSHKSTISYDACLSQ. Cysteine 106 and cysteine 198 are oxidised to a cystine. The chain crosses the membrane as a helical span at residues 110-129; the sequence is LFFFHLLAGMDCFLLTAMAY. Topologically, residues 130–149 are cytoplasmic; that stretch reads DRLLAICQPLTYSTRMSQTV. The chain crosses the membrane as a helical span at residues 150–167; sequence QRMLVAASWACAFTNALT. Residues 168 to 205 are Extracellular-facing; it reads HTVAMSTLNFCGPNEVNHFYCDLPQLFQLSCSSTQLNE. Residues 206–228 traverse the membrane as a helical segment; the sequence is LLLFVAAAFMAVAPLVFISVSYA. The Cytoplasmic portion of the chain corresponds to 229–245; the sequence is HVVAAVLQIRSAEGRKK. A helical membrane pass occupies residues 246 to 268; sequence AFSTCGSHLTVVGIFYGTGVFSY. Residues 269 to 281 lie on the Extracellular side of the membrane; that stretch reads MRLGSVESSDKDK. Residues 282 to 301 form a helical membrane-spanning segment; it reads GVGVFMTVINPMLNPLIYSL. At 302 to 321 the chain is on the cytoplasmic side; that stretch reads RNTDVQGALCQLLVGKRSLT.

It belongs to the G-protein coupled receptor 1 family.

Its subcellular location is the cell membrane. Functionally, odorant receptor. In Homo sapiens (Human), this protein is Olfactory receptor 3A3 (OR3A3).